A 577-amino-acid chain; its full sequence is MGTAKIPALLWFLLAGLVLALAVNPAHGAKTRHYDFFITETNYTRLCHEKSILTVNGQFPGPTIYARKGDFIIVNVHNNGNKNITIHWHGVDQPRNPWSDGPEFITQCPIRPGGNFTYQVILFEEEGTLWWHAHSDFDRATVHGAIVIHPKRGTTFLFRKLDKEIPWWNDDVEHVLDKAKRIGGDVEPSDTNTINGQPGDMFPLCSRDDTFKVAVQQGNTYLLRVINAGLTNDMFFAIAGHRLTVVGIDARYTKPITVDYIMIAPGQTMDVLLKANRTLGSNSRYYMAARTFITLPVDTIRFNNSTATAIVEYTDSAVARPVGPPEFPVLLPAIKDEDAAMAFVKQLRSLGNQDHPVHVPKQVDEHMLIDIDINFLPCDANNATNKLCEGPQGNRFAASLNNVSFQNPAIDVLDAYYYGSGRGVYEENFPNKLTVIVNPTGDINGGGPLLTKRGTKVKVLEYGTVVEVVFQDLSIENHPMHLHGFTFYVVGRGSGTFDERRDPATYNLIDPPFQNTVSVPKSSWAAIRFRADNPGVWFMHCHFDRHVVWGMDTMFIVKDGKTPQAQMLPRPPNMPEC.

A signal peptide spans 1–28 (MGTAKIPALLWFLLAGLVLALAVNPAHG). 2 consecutive Plastocyanin-like domains span residues 37–153 (FITE…PKRG) and 163–316 (KEIP…YTDS). N-linked (GlcNAc...) asparagine glycosylation is found at Asn42 and Asn83. 2 residues coordinate Cu cation: His87 and His89. N-linked (GlcNAc...) asparagine glycosylation is present at Asn115. Cu cation-binding residues include His132 and His134. N-linked (GlcNAc...) asparagine glycosylation is found at Asn276, Asn304, Asn382, and Asn402. The 120-residue stretch at 442–561 (DINGGGPLLT…DTMFIVKDGK (120 aa)) folds into the Plastocyanin-like 3 domain. The Cu cation site is built by His478, His481, His483, His540, Cys541, His542, His546, and Met551.

It belongs to the multicopper oxidase family. Cu cation serves as cofactor.

It is found in the secreted. The protein resides in the extracellular space. It localises to the apoplast. It catalyses the reaction 4 hydroquinone + O2 = 4 benzosemiquinone + 2 H2O. In terms of biological role, lignin degradation and detoxification of lignin-derived products. The polypeptide is Putative laccase-1 (LAC1) (Oryza sativa subsp. japonica (Rice)).